Consider the following 378-residue polypeptide: H repeat-associated putative transposase YhhI (378 aa).

The protein belongs to the transposase 11 family.

The chain is H repeat-associated putative transposase YhhI (yhhI) from Escherichia coli (strain K12).